A 230-amino-acid chain; its full sequence is Transmembrane ascorbate ferrireductase 2 (230 aa).

The next 2 membrane-spanning stretches (helical) occupy residues 5–25 (VLGG…IAAL) and 50–70 (VHPV…MLAY). The Cytochrome b561 domain maps to 14 to 218 (VVRVLGFIIA…LGGFVILGVV (205 aa)). Position 51 (His51) interacts with heme b. Lys77 and Lys81 together coordinate L-ascorbate. The chain crosses the membrane as a helical span at residues 82–102 (LVHLTLQLTAFILSLIGVWAA). His84 provides a ligand contact to heme b. Monodehydro-L-ascorbate radical-binding residues include Phe105, His106, and Tyr115. A heme b-binding site is contributed by His118. The chain crosses the membrane as a helical span at residues 120–140 (WLGLACLFLFAFQWAAGFVTY). Residues Tyr140, Arg150, and Ala151 each coordinate L-ascorbate. His157 contacts heme b. The chain crosses the membrane as a helical span at residues 157–177 (HVFLGISIYALALVTATTGIL). Monodehydro-L-ascorbate radical is bound by residues Phe182 and Asn186. A helical transmembrane segment spans residues 198 to 218 (LVNTMGVLILILGGFVILGVV).

As to quaternary structure, homodimer. Heme b is required as a cofactor. Expressed in roots, seedlings, leaves and flowers. Expressed in the L1 layer of the shoot apex, in the epidermis of leaf primordia and young leaves and in vascular bundles. In the differentiation zone of the root, detected in the pericycle and in the epidermis, but not in the cortex. Strongly expressed in the cortical region of the root tip, in the meristematic tissue and in the epidermal cell layer of lateral roots, but not in the root caps. Highly expressed in unfertilized ovules. In mature embryos, expressed in the epidermis, cotyledon tips and root tips.

Its subcellular location is the membrane. It catalyses the reaction Fe(3+)(out) + L-ascorbate(in) = monodehydro-L-ascorbate radical(in) + Fe(2+)(out) + H(+). Two-heme-containing cytochrome. Catalyzes ascorbate-dependent transmembrane ferric-chelate reduction. This chain is Transmembrane ascorbate ferrireductase 2 (CYB561B), found in Arabidopsis thaliana (Mouse-ear cress).